A 251-amino-acid chain; its full sequence is Derlin-1 (251 aa).

Ser2 is modified (N-acetylserine). Topologically, residues 2-15 (SDIGDWFRSIPAIT) are cytoplasmic. Residues 16–31 (RYWFAATVAVPLVGKL) traverse the membrane as a helical segment. The Lumenal portion of the chain corresponds to 32–69 (GLISPAYLFLWPEAFLYRFQIWRPITATFYFPVGPGTG). The helical transmembrane segment at 70–89 (FLYLVNLYFLYQYSTRLETG) threads the bilayer. The Cytoplasmic segment spans residues 90 to 94 (AFDGR). A helical transmembrane segment spans residues 95 to 115 (PADYLFMLLFNWICIVITGLA). The Lumenal portion of the chain corresponds to 116-122 (MDMQLLM). The chain crosses the membrane as a helical span at residues 123–137 (IPLIMSVLYVWAQLN). Residues 138–154 (RDMIVSFWFGTRFKACY) lie on the Cytoplasmic side of the membrane. The chain crosses the membrane as a helical span at residues 155-166 (LPWVILGFNYII). Topologically, residues 167-170 (GGSV) are lumenal. The helical transmembrane segment at 171–189 (INELIGNLVGHLYFFLMFR) threads the bilayer. The Cytoplasmic segment spans residues 190 to 251 (YPMDLGGRNF…WGQGFRLGDQ (62 aa)). The residue at position 201 (Ser201) is a Phosphoserine. Thr202 bears the Phosphothreonine mark. The residue at position 226 (Ser226) is a Phosphoserine. Residues 229-251 (RAADQNGGGGRHNWGQGFRLGDQ) are disordered. The SHP-box motif lies at 241–248 (NWGQGFRL).

This sequence belongs to the derlin family. In terms of assembly, homotetramer. The four subunits of the tetramer are arranged in a twofold symmetry. Forms heterooligomers with DERL2 and DERL3; binding to DERL3 is poorer than that between DERL2 and DERL3. Interacts (via SHP-box motif) with VCP. Interacts with AMFR, SELENOS, SEL1L, SELENOK and SYVN1, as well as with SEL1L-SYVN1 and VCP-SELENOS protein complexes; this interaction is weaker than that observed between DERL2 and these complexes. Interacts with NGLY1 and YOD1. Does not bind to EDEM1. Interacts with DNAJB9. Interacts with RNF103. Interacts with HM13. Interacts with XBP1 isoform 1 (via luminal/ectodomain domain); the interaction obviates the need for ectodomain shedding prior HM13/SPP-mediated XBP1 isoform 1 cleavage. Interacts with the signal recognition particle/SRP and the SRP receptor; in the process of endoplasmic reticulum stress-induced pre-emptive quality control. May interact with UBXN6. Interacts with ZFAND2B; probably through VCP. Interacts with CCDC47. Interacts with C18orf32. May interact with TRAM1. Forms a complex with SVIP and VCP/p97. As to quaternary structure, (Microbial infection) Interacts with the cytomegalovirus US11 protein. As to expression, ubiquitous.

Its subcellular location is the endoplasmic reticulum membrane. Functionally, functional component of endoplasmic reticulum-associated degradation (ERAD) for misfolded lumenal proteins. Forms homotetramers which encircle a large channel traversing the endoplasmic reticulum (ER) membrane. This allows the retrotranslocation of misfolded proteins from the ER into the cytosol where they are ubiquitinated and degraded by the proteasome. The channel has a lateral gate within the membrane which provides direct access to membrane proteins with no need to reenter the ER lumen first. May mediate the interaction between VCP and the misfolded protein. Also involved in endoplasmic reticulum stress-induced pre-emptive quality control, a mechanism that selectively attenuates the translocation of newly synthesized proteins into the endoplasmic reticulum and reroutes them to the cytosol for proteasomal degradation. By controlling the steady-state expression of the IGF1R receptor, indirectly regulates the insulin-like growth factor receptor signaling pathway. In terms of biological role, (Microbial infection) In case of infection by cytomegaloviruses, it plays a central role in the export from the ER and subsequent degradation of MHC class I heavy chains via its interaction with US11 viral protein, which recognizes and associates with MHC class I heavy chains. Also participates in the degradation process of misfolded cytomegalovirus US2 protein. The sequence is that of Derlin-1 from Homo sapiens (Human).